A 380-amino-acid chain; its full sequence is Cytochrome b (380 aa).

4 consecutive transmembrane segments (helical) span residues 33-53 (FGSL…FLAM), 77-98 (WLIR…YMHI), 113-133 (WNIG…GYVL), and 178-198 (FFAF…LHLL). Residues His-83 and His-97 each contribute to the heme b site. Positions 182 and 196 each coordinate heme b. A ubiquinone is bound at residue His-201. A run of 4 helical transmembrane segments spans residues 226-246 (YKDL…ALFA), 288-308 (LGGV…PILH), 320-340 (LTQF…WIGG), and 347-367 (FIII…VLAP).

The protein belongs to the cytochrome b family. The cytochrome bc1 complex contains 3 respiratory subunits (MT-CYB, CYC1 and UQCRFS1), 2 core proteins (UQCRC1 and UQCRC2) and probably 6 low-molecular weight proteins. The cofactor is heme b.

It is found in the mitochondrion inner membrane. Functionally, component of the ubiquinol-cytochrome c reductase complex (complex III or cytochrome b-c1 complex) that is part of the mitochondrial respiratory chain. The b-c1 complex mediates electron transfer from ubiquinol to cytochrome c. Contributes to the generation of a proton gradient across the mitochondrial membrane that is then used for ATP synthesis. The polypeptide is Cytochrome b (mt-cyb) (Salmo trutta (Brown trout)).